The following is a 366-amino-acid chain: DNA integrity scanning protein DisA (366 aa).

In terms of domain architecture, DAC spans 21-159 (VHTLKGTLQR…EGKSHMLEQP (139 aa)). ATP is bound by residues Gly-88, Leu-106, and 119 to 123 (TRHRS).

The protein belongs to the DisA family. Homooctamer. Mg(2+) serves as cofactor.

It catalyses the reaction 2 ATP = 3',3'-c-di-AMP + 2 diphosphate. Its function is as follows. Participates in a DNA-damage check-point. DisA forms globular foci that rapidly scan along the chromosomes searching for lesions. Functionally, also has diadenylate cyclase activity, catalyzing the condensation of 2 ATP molecules into cyclic di-AMP (c-di-AMP). c-di-AMP likely acts as a signaling molecule that may couple DNA integrity with a cellular process. This chain is DNA integrity scanning protein DisA, found in Corynebacterium glutamicum (strain ATCC 13032 / DSM 20300 / JCM 1318 / BCRC 11384 / CCUG 27702 / LMG 3730 / NBRC 12168 / NCIMB 10025 / NRRL B-2784 / 534).